Here is a 391-residue protein sequence, read N- to C-terminus: Paired box protein Pax-5 (391 aa).

Residues 1 to 21 (MDLEKNYPTPRTSRTGHGGVN) form a disordered region. Positions 16 to 142 (GHGGVNQLGG…SSINRIIRTK (127 aa)) form a DNA-binding region, paired. The PAI subdomain stretch occupies residues 19 to 75 (GVNQLGGVFVNGRPLPDVVRQRIVELAHQGVRPCDISRQLRVSHGCVSKILGRYYET). The interval 94–142 (KVVEKIAEYKRQNPTMFAWEIRDRLLAERVCDNDTVPSVSSINRIIRTK) is RED subdomain. A disordered region spans residues 182–218 (SGILGITSPSADTNKRKRDEGIQESPVPNGHSLPGRD).

As to quaternary structure, interacts with ETS1; this interaction alters PAX5 DNA-binding properties. Binds DNA as a monomer. Interacts with TBP; this interaction allows PAX5 to interact with the basal transcription machinery. Interacts with RB1. Interacts with TLE4. Interacts with DAXX. (Microbial infection) Interacts (via N-terminus) with Epstein-Barr virus protein BZLF1 (via C-terminus); this interaction inhibits BZLF1-mediated lytic viral reactivation. Interacts also with EBNA1; this interaction promotes EBNA1-dependent transcription. O-glycosylated. In terms of processing, phosphorylated by SYK. This phosphorylation plays an important role in the abolition of BLIMP1 repression by PAX5 in order to trigger plasma cell differentiation.

It localises to the nucleus. Transcription factor that plays an essential role in commitment of lymphoid progenitors to the B-lymphocyte lineage. Fulfills a dual role by repressing B-lineage inappropriate genes and simultaneously activating B-lineage-specific genes. In turn, regulates cell adhesion and migration, induces V(H)-to-D(H)J(H) recombination, facilitates pre-B-cell receptor signaling and promotes development to the mature B-cell stage. Repression of the cohesin-release factor WAPL causes global changes of the chromosomal architecture in pro-B cells to facilitate the generation of a diverse antibody repertoire. In terms of biological role, (Microbial infection) Plays an essential role in the maintenance of Epstein-Barr virus genome copy number within the host cell by promoting EBNA1/oriP-dependent binding and transcription. Also participates in the inhibition of lytic EBV reactivation by modulating viral BZLF1 activity. This Homo sapiens (Human) protein is Paired box protein Pax-5 (PAX5).